We begin with the raw amino-acid sequence, 95 residues long: Co-chaperonin GroES (95 aa).

Belongs to the GroES chaperonin family. In terms of assembly, heptamer of 7 subunits arranged in a ring. Interacts with the chaperonin GroEL.

The protein resides in the cytoplasm. Together with the chaperonin GroEL, plays an essential role in assisting protein folding. The GroEL-GroES system forms a nano-cage that allows encapsulation of the non-native substrate proteins and provides a physical environment optimized to promote and accelerate protein folding. GroES binds to the apical surface of the GroEL ring, thereby capping the opening of the GroEL channel. This is Co-chaperonin GroES from Pelodictyon phaeoclathratiforme (strain DSM 5477 / BU-1).